Consider the following 651-residue polypeptide: F-box only protein 43 (651 aa).

Disordered stretches follow at residues 14-42 and 140-171; these read MTAG…LKGF and LRRI…TSTL. The span at 27–36 shows a compositional bias: polar residues; that stretch reads TSVSQDSGYS. S33 bears the Phosphoserine; by PLK1 mark. At T195 the chain carries Phosphothreonine; by CaMK2. The region spanning 424 to 499 is the F-box domain; the sequence is SGCFELPEDS…QDKSAHQRRK (76 aa). The segment at 579-627 adopts a ZBR-type zinc-finger fold; sequence ALKPCPRCQYPAKYQALKKRGTCSRKDCGFDFCSLCLCTFHGSKECGTG. Residues C583, C586, C601, C606, C611, C614, H619, and C624 each contribute to the Zn(2+) site.

In terms of assembly, part of a SCF (SKP1-cullin-F-box) protein ligase complex. Interaction with SKP1 does not occur. In terms of processing, phosphorylated on Thr-195 by CaMK2 in response to calcium during egg activation, which promotes subsequent phosphorylation by PLK1, ubiquitination and protesomal degradation. Post-translationally, ubiquitinated by FBXW1 during egg activation, which promotes proteasomal degradation.

It participates in protein modification; protein ubiquitination. In terms of biological role, required to prevent anaphase onset in cytostatic factor-arrested oocytes. Inhibits the anaphase-promoting complex/cyclosome (APC/C) ubiquitin ligase and prevents cyclin degradation. Probably recognizes and binds to some phosphorylated proteins and promotes their ubiquitination and degradation. The sequence is that of F-box only protein 43 (fbxo43) from Xenopus laevis (African clawed frog).